The chain runs to 1320 residues: Tetratricopeptide repeat protein 21A (1320 aa).

19 TPR repeats span residues 4–38 (NDSS…FSND), 110–143 (GTAL…SRGF), 146–180 (AYVL…TKDV), 181–213 (LGLM…SGSF), 215–247 (PALV…DESN), 334–367 (VHVA…DKDG), 502–534 (IDPL…DPAS), 572–605 (PLYH…PALK), 728–761 (PHTS…NPHD), 762–795 (ASLA…NGQD), 797–828 (LCCD…DIVQ), 837–869 (VKCL…QSRI), 889–922 (ASIC…LPTD), 924–956 (KVML…EQNH), 957–990 (ETAS…APDN), 1028–1061 (PGFN…STWG), 1201–1234 (EKSW…NKSC), 1236–1268 (KAYE…SHHA), and 1270–1303 (PAIG…HPDY).

Belongs to the TTC21 family. Interacts with IFT20. Interacts with IFT52. Interacts with IFT140. Interacts with CEP78; regulating IFT20 stability and localization. In terms of tissue distribution, strongly expressed in testis.

In terms of biological role, intraflagellar transport (IFT)-associated protein required for spermatogenesis. Required for sperm flagellar formation and intraflagellar transport. The chain is Tetratricopeptide repeat protein 21A from Homo sapiens (Human).